Here is a 206-residue protein sequence, read N- to C-terminus: Ras-related protein Rab-18 (206 aa).

M1 bears the N-acetylmethionine mark. The GTP site is built by S17, G20, K21, S22, S23, D34, P35, T40, G66, K123, and D125. S22 serves as a coordination point for Mg(2+). 2 consecutive short sequence motifs (switch) follow at residues 31-45 (DTFD…GVDF) and 63-80 (DTAG…YYRG). Residue T40 coordinates Mg(2+). S144 carries the post-translational modification Phosphoserine. A GTP-binding site is contributed by A152. C199 carries S-palmitoyl cysteine lipidation. C203 is subject to Cysteine methyl ester. Residue C203 is the site of S-geranylgeranyl cysteine attachment. The propeptide at 204–206 (SVL) is removed in mature form.

The protein belongs to the small GTPase superfamily. Rab family. As to quaternary structure, interacts (in GTP-bound form) with ZFYVE1. Interacts with ZW10 and this interaction is enhanced in the presence of ZFYVE1. Interacts with BSCL2. In terms of assembly, (Microbial infection) Interacts with Hepatitis C virus (HCV) non-structural protein 5A; this interaction may promote the association of NS5A and other viral replicase components with lipid droplets. Mg(2+) is required as a cofactor. In terms of tissue distribution, ubiquitous.

Its subcellular location is the endoplasmic reticulum membrane. It localises to the golgi apparatus. The protein localises to the cis-Golgi network membrane. The protein resides in the lipid droplet. It is found in the apical cell membrane. The catalysed reaction is GTP + H2O = GDP + phosphate + H(+). Regulated by guanine nucleotide exchange factor (GEF) RAB3GAP1-RAB3GAP2 complex at the cis-Golgi membrane which promotes the exchange of bound GDP for free GTP. Regulated by GTPase activating protein (GAP) TBC1D20 at the ER membrane which increases the GTP hydrolysis activity. Inhibited by GDP dissociation inhibitors (GDIs) which prevent Rab-GDP dissociation. The small GTPases Rab are key regulators of intracellular membrane trafficking, from the formation of transport vesicles to their fusion with membranes. Rabs cycle between an inactive GDP-bound form and an active GTP-bound form that is able to recruit to membranes different sets of downstream effectors directly responsible for vesicle formation, movement, tethering and fusion. RAB18 is required for the localization of ZFYVE1 to lipid droplets and for its function in mediating the formation of endoplasmic reticulum-lipid droplets (ER-LD) contacts. Also required for maintaining endoplasmic reticulum structure. Plays a role in apical endocytosis/recycling. Plays a key role in eye and brain development and neurodegeneration. This chain is Ras-related protein Rab-18, found in Homo sapiens (Human).